We begin with the raw amino-acid sequence, 343 residues long: Annexin A1 isoform p37 (343 aa).

An Isoglutamyl lysine isopeptide (Gln-Lys) (interchain with K-?) cross-link involves residue glutamine 19. Tyrosine 21 is modified (phosphotyrosine; by EGFR; in vitro). Phosphoserine; by PKC; in vitro is present on serine 24. 4 Annexin repeats span residues phenylalanine 38–lysine 109, threonine 110–lysine 181, aspartate 193–lysine 265, and serine 269–glycine 340.

This sequence belongs to the annexin family. Phosphorylated by protein kinase C and epidermal growth factor receptor/kinase. In terms of processing, the N-terminus is blocked.

The protein localises to the nucleus. It localises to the cytoplasm. It is found in the cell projection. Its subcellular location is the cilium. The protein resides in the basolateral cell membrane. Functionally, calcium/phospholipid-binding protein which promotes membrane fusion and is involved in exocytosis. This protein regulates phospholipase A2 activity. It seems to bind from two to four calcium ions with high affinity. This is Annexin A1 isoform p37 (CP37) from Columba livia (Rock dove).